Here is a 172-residue protein sequence, read N- to C-terminus: Protein GrpE (172 aa).

This sequence belongs to the GrpE family. In terms of assembly, homodimer.

Its subcellular location is the cytoplasm. Participates actively in the response to hyperosmotic and heat shock by preventing the aggregation of stress-denatured proteins, in association with DnaK and GrpE. It is the nucleotide exchange factor for DnaK and may function as a thermosensor. Unfolded proteins bind initially to DnaJ; upon interaction with the DnaJ-bound protein, DnaK hydrolyzes its bound ATP, resulting in the formation of a stable complex. GrpE releases ADP from DnaK; ATP binding to DnaK triggers the release of the substrate protein, thus completing the reaction cycle. Several rounds of ATP-dependent interactions between DnaJ, DnaK and GrpE are required for fully efficient folding. In Thermotoga maritima (strain ATCC 43589 / DSM 3109 / JCM 10099 / NBRC 100826 / MSB8), this protein is Protein GrpE.